Here is a 226-residue protein sequence, read N- to C-terminus: Lipoprotein signal peptidase (226 aa).

3 consecutive transmembrane segments (helical) span residues 12-32 (KVVA…KIWV), 69-89 (FLSL…AKLV), and 103-123 (SLII…GVIF). Residues aspartate 150 and aspartate 184 contribute to the active site. Residues 173 to 193 (FVFFHPVFNFADSCISIGLIL) form a helical membrane-spanning segment.

This sequence belongs to the peptidase A8 family.

It localises to the cell inner membrane. The catalysed reaction is Release of signal peptides from bacterial membrane prolipoproteins. Hydrolyzes -Xaa-Yaa-Zaa-|-(S,diacylglyceryl)Cys-, in which Xaa is hydrophobic (preferably Leu), and Yaa (Ala or Ser) and Zaa (Gly or Ala) have small, neutral side chains.. The protein operates within protein modification; lipoprotein biosynthesis (signal peptide cleavage). Its function is as follows. This protein specifically catalyzes the removal of signal peptides from prolipoproteins. This Porphyromonas gingivalis (strain ATCC 33277 / DSM 20709 / CIP 103683 / JCM 12257 / NCTC 11834 / 2561) protein is Lipoprotein signal peptidase.